Here is an 87-residue protein sequence, read N- to C-terminus: Small ribosomal subunit protein uS17 (87 aa).

The protein belongs to the universal ribosomal protein uS17 family. As to quaternary structure, part of the 30S ribosomal subunit.

Its function is as follows. One of the primary rRNA binding proteins, it binds specifically to the 5'-end of 16S ribosomal RNA. The polypeptide is Small ribosomal subunit protein uS17 (Alkalilimnicola ehrlichii (strain ATCC BAA-1101 / DSM 17681 / MLHE-1)).